An 85-amino-acid chain; its full sequence is Cell division topological specificity factor (85 aa).

It belongs to the MinE family.

In terms of biological role, prevents the cell division inhibition by proteins MinC and MinD at internal division sites while permitting inhibition at polar sites. This ensures cell division at the proper site by restricting the formation of a division septum at the midpoint of the long axis of the cell. In Cellvibrio japonicus (strain Ueda107) (Pseudomonas fluorescens subsp. cellulosa), this protein is Cell division topological specificity factor.